A 657-amino-acid polypeptide reads, in one-letter code: Probable intron-encoded endonuclease aI2 (657 aa).

The tract at residues 1–245 is COX1 exons 1 to 2 encoded; that stretch reads MKQMSYVTRW…TYEHLFWFFG (245 aa). Helical transmembrane passes span 19 to 39, 69 to 89, 103 to 123, 152 to 172, 188 to 208, and 269 to 289; these read IGMT…GMSV, LLMM…NFFL, LNNI…CSVL, AMFA…NFMV, PLFA…LPVL, and MYFI…ANMV. The tract at residues 246 to 657 is COX1 intron 2 encoded; the sequence is QWWPTNYVNN…KFENKWNKKF (412 aa).

This sequence in the C-terminal section; belongs to the LAGLIDADG endonuclease family. It in the N-terminal section; belongs to the heme-copper respiratory oxidase family. Post-translationally, the mature protein may arise from proteolytic cleavage of an in-frame translation of COX1 exons 1 and 2 plus intron 2, containing the aI2 open reading frame.

The protein resides in the mitochondrion. It localises to the membrane. Functionally, mitochondrial DNA endonuclease involved in intron homing. This chain is Probable intron-encoded endonuclease aI2 (aI2), found in Debaryomyces hansenii (strain ATCC 36239 / CBS 767 / BCRC 21394 / JCM 1990 / NBRC 0083 / IGC 2968) (Yeast).